Consider the following 1118-residue polypeptide: Protein translocase subunit SecA (1118 aa).

ATP-binding positions include Gln-176, 194 to 198 (GEGKT), and Asp-693. Positions 1034 to 1056 (QQPVQQPKYRETKDEAGSAFGGG) are disordered.

Belongs to the SecA family. Monomer and homodimer. Part of the essential Sec protein translocation apparatus which comprises SecA, SecYEG and auxiliary proteins SecDF. Other proteins may also be involved.

Its subcellular location is the cell inner membrane. The protein localises to the cytoplasm. The enzyme catalyses ATP + H2O + cellular proteinSide 1 = ADP + phosphate + cellular proteinSide 2.. Its function is as follows. Part of the Sec protein translocase complex. Interacts with the SecYEG preprotein conducting channel. Has a central role in coupling the hydrolysis of ATP to the transfer of proteins into and across the cell membrane, serving as an ATP-driven molecular motor driving the stepwise translocation of polypeptide chains across the membrane. The protein is Protein translocase subunit SecA of Cytophaga hutchinsonii (strain ATCC 33406 / DSM 1761 / CIP 103989 / NBRC 15051 / NCIMB 9469 / D465).